Consider the following 254-residue polypeptide: Small ribosomal subunit protein uS2 (254 aa).

A disordered region spans residues 228–254 (DRGAEKEVEAAEEAPAAEAEAAPATEE). Over residues 240–254 (EAPAAEAEAAPATEE) the composition is skewed to low complexity.

It belongs to the universal ribosomal protein uS2 family.

The chain is Small ribosomal subunit protein uS2 from Flavobacterium johnsoniae (strain ATCC 17061 / DSM 2064 / JCM 8514 / BCRC 14874 / CCUG 350202 / NBRC 14942 / NCIMB 11054 / UW101) (Cytophaga johnsonae).